Here is a 149-residue protein sequence, read N- to C-terminus: 3-hydroxyacyl-[acyl-carrier-protein] dehydratase FabZ (149 aa).

The active site involves His-53.

It belongs to the thioester dehydratase family. FabZ subfamily.

It is found in the cytoplasm. The enzyme catalyses a (3R)-hydroxyacyl-[ACP] = a (2E)-enoyl-[ACP] + H2O. Functionally, involved in unsaturated fatty acids biosynthesis. Catalyzes the dehydration of short chain beta-hydroxyacyl-ACPs and long chain saturated and unsaturated beta-hydroxyacyl-ACPs. The protein is 3-hydroxyacyl-[acyl-carrier-protein] dehydratase FabZ of Neisseria meningitidis serogroup C / serotype 2a (strain ATCC 700532 / DSM 15464 / FAM18).